A 100-amino-acid polypeptide reads, in one-letter code: Urease subunit gamma (100 aa).

The protein belongs to the urease gamma subunit family. As to quaternary structure, heterotrimer of UreA (gamma), UreB (beta) and UreC (alpha) subunits. Three heterotrimers associate to form the active enzyme.

It is found in the cytoplasm. The enzyme catalyses urea + 2 H2O + H(+) = hydrogencarbonate + 2 NH4(+). It participates in nitrogen metabolism; urea degradation; CO(2) and NH(3) from urea (urease route): step 1/1. This Polynucleobacter asymbioticus (strain DSM 18221 / CIP 109841 / QLW-P1DMWA-1) (Polynucleobacter necessarius subsp. asymbioticus) protein is Urease subunit gamma.